Consider the following 88-residue polypeptide: Putative carnobacteriocin-BM1 immunity protein (88 aa).

Its function is as follows. Could impart immunity to carnobacteriocin-BM1 to naturally sensitive host strains. This is Putative carnobacteriocin-BM1 immunity protein from Carnobacterium maltaromaticum (Carnobacterium piscicola).